Consider the following 253-residue polypeptide: tRNA uridine(34) hydroxylase (253 aa).

The region spanning 127–221 (RGRPLVLLDT…YFEEVGGEGY (95 aa)) is the Rhodanese domain. Catalysis depends on Cys-181, which acts as the Cysteine persulfide intermediate.

The protein belongs to the TrhO family.

It carries out the reaction uridine(34) in tRNA + AH2 + O2 = 5-hydroxyuridine(34) in tRNA + A + H2O. Its function is as follows. Catalyzes oxygen-dependent 5-hydroxyuridine (ho5U) modification at position 34 in tRNAs. This Xanthomonas oryzae pv. oryzae (strain MAFF 311018) protein is tRNA uridine(34) hydroxylase.